The primary structure comprises 359 residues: Histidinol-phosphate aminotransferase (359 aa).

N6-(pyridoxal phosphate)lysine is present on Lys212.

Belongs to the class-II pyridoxal-phosphate-dependent aminotransferase family. Histidinol-phosphate aminotransferase subfamily. Homodimer. Pyridoxal 5'-phosphate serves as cofactor.

The catalysed reaction is L-histidinol phosphate + 2-oxoglutarate = 3-(imidazol-4-yl)-2-oxopropyl phosphate + L-glutamate. Its pathway is amino-acid biosynthesis; L-histidine biosynthesis; L-histidine from 5-phospho-alpha-D-ribose 1-diphosphate: step 7/9. The protein is Histidinol-phosphate aminotransferase of Buchnera aphidicola subsp. Schlechtendalia chinensis.